The primary structure comprises 292 residues: MPSLKDLRNRIASVKATQKITKAMQMVAAAKLRRAQEAAEAARPYSQRMGAVLANIAQNVSGEDAPALMVGTGKDDVHLLVVCTAKRGLCGGFNSQIARLARDHARKLLAEGKTVKIITVGKKGADILRREFSALLHDHVDLREVKQLAFVHADQIGHKIIKLFEEGAFDVCTLFYSEFKSVISQVSTAQQLIPASADNEAEMETAGDAIYEYEPDPAAILSTLIPRNISVQIFRALLENVAGEMGAKMSAMDNATRNAGDMINKLSITYNRQRQAQITKELIEIISGAEAL.

It belongs to the ATPase gamma chain family. As to quaternary structure, F-type ATPases have 2 components, CF(1) - the catalytic core - and CF(0) - the membrane proton channel. CF(1) has five subunits: alpha(3), beta(3), gamma(1), delta(1), epsilon(1). CF(0) has three main subunits: a, b and c.

It localises to the cell inner membrane. Functionally, produces ATP from ADP in the presence of a proton gradient across the membrane. The gamma chain is believed to be important in regulating ATPase activity and the flow of protons through the CF(0) complex. The protein is ATP synthase gamma chain of Brucella abortus (strain S19).